We begin with the raw amino-acid sequence, 570 residues long: Dihydroxy-acid dehydratase (570 aa).

Cys61 contributes to the [2Fe-2S] cluster binding site. Asp94 provides a ligand contact to Mg(2+). [2Fe-2S] cluster is bound at residue Cys135. Residues Asp136 and Lys137 each coordinate Mg(2+). Lys137 bears the N6-carboxylysine mark. Cys207 is a binding site for [2Fe-2S] cluster. Residue Glu459 participates in Mg(2+) binding. The active-site Proton acceptor is the Ser485.

This sequence belongs to the IlvD/Edd family. In terms of assembly, homodimer. [2Fe-2S] cluster serves as cofactor. It depends on Mg(2+) as a cofactor.

The enzyme catalyses (2R)-2,3-dihydroxy-3-methylbutanoate = 3-methyl-2-oxobutanoate + H2O. It catalyses the reaction (2R,3R)-2,3-dihydroxy-3-methylpentanoate = (S)-3-methyl-2-oxopentanoate + H2O. The protein operates within amino-acid biosynthesis; L-isoleucine biosynthesis; L-isoleucine from 2-oxobutanoate: step 3/4. It functions in the pathway amino-acid biosynthesis; L-valine biosynthesis; L-valine from pyruvate: step 3/4. Functions in the biosynthesis of branched-chain amino acids. Catalyzes the dehydration of (2R,3R)-2,3-dihydroxy-3-methylpentanoate (2,3-dihydroxy-3-methylvalerate) into 2-oxo-3-methylpentanoate (2-oxo-3-methylvalerate) and of (2R)-2,3-dihydroxy-3-methylbutanoate (2,3-dihydroxyisovalerate) into 2-oxo-3-methylbutanoate (2-oxoisovalerate), the penultimate precursor to L-isoleucine and L-valine, respectively. The sequence is that of Dihydroxy-acid dehydratase from Lactococcus lactis subsp. cremoris (strain SK11).